The following is a 175-amino-acid chain: Alkyl hydroperoxide reductase AhpD (175 aa).

Cys131 functions as the Proton donor in the catalytic mechanism. The cysteines at positions 131 and 134 are disulfide-linked. The Cysteine sulfenic acid (-SOH) intermediate role is filled by Cys134.

The protein belongs to the AhpD family.

The enzyme catalyses N(6)-[(R)-dihydrolipoyl]-L-lysyl-[lipoyl-carrier protein] + a hydroperoxide = N(6)-[(R)-lipoyl]-L-lysyl-[lipoyl-carrier protein] + an alcohol + H2O. Its function is as follows. Antioxidant protein with alkyl hydroperoxidase activity. Required for the reduction of the AhpC active site cysteine residues and for the regeneration of the AhpC enzyme activity. In Brucella canis (strain ATCC 23365 / NCTC 10854 / RM-666), this protein is Alkyl hydroperoxide reductase AhpD.